We begin with the raw amino-acid sequence, 94 residues long: Integration host factor subunit beta (94 aa).

Belongs to the bacterial histone-like protein family. In terms of assembly, heterodimer of an alpha and a beta chain.

This protein is one of the two subunits of integration host factor, a specific DNA-binding protein that functions in genetic recombination as well as in transcriptional and translational control. In Azoarcus sp. (strain BH72), this protein is Integration host factor subunit beta.